The primary structure comprises 382 residues: Dual-specificity RNA methyltransferase RlmN (382 aa).

Glu95 (proton acceptor) is an active-site residue. The 249-residue stretch at 101-349 folds into the Radical SAM core domain; that stretch reads EETRGTLCVS…TTVRKTRGDD (249 aa). Cys108 and Cys354 are oxidised to a cystine. The [4Fe-4S] cluster site is built by Cys115, Cys119, and Cys122. Residues 180–181, Ser212, 234–236, and Asn311 each bind S-adenosyl-L-methionine; these read GE and SLH. The active-site S-methylcysteine intermediate is Cys354.

This sequence belongs to the radical SAM superfamily. RlmN family. Requires [4Fe-4S] cluster as cofactor.

It localises to the cytoplasm. It carries out the reaction adenosine(2503) in 23S rRNA + 2 reduced [2Fe-2S]-[ferredoxin] + 2 S-adenosyl-L-methionine = 2-methyladenosine(2503) in 23S rRNA + 5'-deoxyadenosine + L-methionine + 2 oxidized [2Fe-2S]-[ferredoxin] + S-adenosyl-L-homocysteine. The catalysed reaction is adenosine(37) in tRNA + 2 reduced [2Fe-2S]-[ferredoxin] + 2 S-adenosyl-L-methionine = 2-methyladenosine(37) in tRNA + 5'-deoxyadenosine + L-methionine + 2 oxidized [2Fe-2S]-[ferredoxin] + S-adenosyl-L-homocysteine. In terms of biological role, specifically methylates position 2 of adenine 2503 in 23S rRNA and position 2 of adenine 37 in tRNAs. m2A2503 modification seems to play a crucial role in the proofreading step occurring at the peptidyl transferase center and thus would serve to optimize ribosomal fidelity. In Paraburkholderia phymatum (strain DSM 17167 / CIP 108236 / LMG 21445 / STM815) (Burkholderia phymatum), this protein is Dual-specificity RNA methyltransferase RlmN.